The chain runs to 168 residues: Nascent polypeptide-associated complex subunit alpha (168 aa).

Positions 14-78 (SKNEKKAREL…PKVDDFTRRL (65 aa)) constitute an NAC-A/B domain. Residues 83-129 (QQAASAAKDPQSIQADMAAAAAAPAAPAAPAAAPEEDEAGQVDESGL) are disordered. Low complexity predominate over residues 100-115 (AAAAAAPAAPAAPAAA). One can recognise a UBA domain in the interval 129–168 (LDGQDIELVMQQANVSRNKAVKALREHNSDIVNAIMSLSK).

The protein belongs to the NAC-alpha family. Part of the nascent polypeptide-associated complex (NAC), consisting of EGD2 and EGD1. NAC associates with ribosomes via EGD1.

It is found in the cytoplasm. The protein localises to the nucleus. Its function is as follows. Component of the nascent polypeptide-associated complex (NAC), a dynamic component of the ribosomal exit tunnel, protecting the emerging polypeptides from interaction with other cytoplasmic proteins to ensure appropriate nascent protein targeting. The NAC complex also promotes mitochondrial protein import by enhancing productive ribosome interactions with the outer mitochondrial membrane and blocks the inappropriate interaction of ribosomes translating non-secretory nascent polypeptides with translocation sites in the membrane of the endoplasmic reticulum. EGD2 may also be involved in transcription regulation. The sequence is that of Nascent polypeptide-associated complex subunit alpha (EGD2) from Eremothecium gossypii (strain ATCC 10895 / CBS 109.51 / FGSC 9923 / NRRL Y-1056) (Yeast).